Reading from the N-terminus, the 37-residue chain is Alpha-conotoxin-like Kn1.2 (37 aa).

The span at 1–15 (ESDGAHAKARADKPA) shows a compositional bias: basic and acidic residues. The propeptide occupies 1–22 (ESDGAHAKARADKPARSATNRQ). The segment at 1–23 (ESDGAHAKARADKPARSATNRQP) is disordered. 2 disulfide bridges follow: C25–C31 and C26–C36. At C36 the chain carries Cysteine amide.

The protein belongs to the conotoxin A superfamily. As to expression, expressed by the venom duct.

It localises to the secreted. In terms of biological role, alpha-conotoxins act on postsynaptic membranes, they bind to the nicotinic acetylcholine receptors (nAChR) and thus inhibit them. This toxin inhibits high voltage-activated (HVA) calcium channel currents in rat DRG neurons (13% inhibition at 1 uM toxin) probably by activating GABA(B) receptors (GABBR1 and/or GABBR2). The polypeptide is Alpha-conotoxin-like Kn1.2 (Conus kinoshitai (Kinoshita's cone)).